We begin with the raw amino-acid sequence, 449 residues long: Adenylosuccinate synthetase (449 aa).

GTP contacts are provided by residues glycine 12–lysine 18 and glycine 40–threonine 42. Aspartate 13 functions as the Proton acceptor in the catalytic mechanism. Residues aspartate 13 and glycine 40 each coordinate Mg(2+). IMP contacts are provided by residues aspartate 13–lysine 16, asparagine 38–histidine 41, threonine 128, arginine 142, glutamine 223, threonine 238, and arginine 302. The Proton donor role is filled by histidine 41. Position 298 to 304 (threonine 298 to arginine 304) interacts with substrate. GTP contacts are provided by residues arginine 304, lysine 330–aspartate 332, and serine 412–glycine 414.

Belongs to the adenylosuccinate synthetase family. As to quaternary structure, homodimer. It depends on Mg(2+) as a cofactor.

It is found in the cytoplasm. It catalyses the reaction IMP + L-aspartate + GTP = N(6)-(1,2-dicarboxyethyl)-AMP + GDP + phosphate + 2 H(+). The protein operates within purine metabolism; AMP biosynthesis via de novo pathway; AMP from IMP: step 1/2. Functionally, plays an important role in the de novo pathway of purine nucleotide biosynthesis. Catalyzes the first committed step in the biosynthesis of AMP from IMP. The protein is Adenylosuccinate synthetase of Gloeothece citriformis (strain PCC 7424) (Cyanothece sp. (strain PCC 7424)).